We begin with the raw amino-acid sequence, 111 residues long: Large ribosomal subunit protein uL24 (111 aa).

It belongs to the universal ribosomal protein uL24 family. In terms of assembly, part of the 50S ribosomal subunit.

Its function is as follows. One of two assembly initiator proteins, it binds directly to the 5'-end of the 23S rRNA, where it nucleates assembly of the 50S subunit. One of the proteins that surrounds the polypeptide exit tunnel on the outside of the subunit. This chain is Large ribosomal subunit protein uL24, found in Myxococcus xanthus (strain DK1622).